Consider the following 469-residue polypeptide: Glutamate--tRNA ligase (469 aa).

Positions 11 to 21 (PSPTGFIHLGN) match the 'HIGH' region motif. Residues 243 to 247 (KMSKR) carry the 'KMSKS' region motif. Lys246 is a binding site for ATP.

Belongs to the class-I aminoacyl-tRNA synthetase family. Glutamate--tRNA ligase type 1 subfamily. In terms of assembly, monomer.

The protein localises to the cytoplasm. The catalysed reaction is tRNA(Glu) + L-glutamate + ATP = L-glutamyl-tRNA(Glu) + AMP + diphosphate. Catalyzes the attachment of glutamate to tRNA(Glu) in a two-step reaction: glutamate is first activated by ATP to form Glu-AMP and then transferred to the acceptor end of tRNA(Glu). The polypeptide is Glutamate--tRNA ligase (Burkholderia ambifaria (strain MC40-6)).